The chain runs to 234 residues: Ubiquinone biosynthesis O-methyltransferase (234 aa).

S-adenosyl-L-methionine is bound by residues R39, G59, D80, and M124.

The protein belongs to the methyltransferase superfamily. UbiG/COQ3 family.

It catalyses the reaction a 3-demethylubiquinol + S-adenosyl-L-methionine = a ubiquinol + S-adenosyl-L-homocysteine + H(+). The enzyme catalyses a 3-(all-trans-polyprenyl)benzene-1,2-diol + S-adenosyl-L-methionine = a 2-methoxy-6-(all-trans-polyprenyl)phenol + S-adenosyl-L-homocysteine + H(+). Its pathway is cofactor biosynthesis; ubiquinone biosynthesis. In terms of biological role, O-methyltransferase that catalyzes the 2 O-methylation steps in the ubiquinone biosynthetic pathway. In Aliivibrio fischeri (strain MJ11) (Vibrio fischeri), this protein is Ubiquinone biosynthesis O-methyltransferase.